Reading from the N-terminus, the 447-residue chain is Oxysterols receptor LXR-alpha (447 aa).

Disordered regions lie at residues 1-37 (MSLW…GGSS) and 65-88 (ALLT…KKGP). Residues 1–96 (MSLWLGAPVP…GPAPKMLGNE (96 aa)) form a transactivation AF-1; required for ligand-independent transactivation function region. Residues 24–37 (GAQDASSQAQGGSS) show a composition bias toward low complexity. Residues 95–170 (NELCSVCGDK…AGMREECVLS (76 aa)) constitute a DNA-binding region (nuclear receptor). 2 consecutive NR C4-type zinc fingers follow at residues 98–118 (CSVC…CEGC) and 134–158 (CHSG…LRKC). The disordered stretch occupies residues 180–202 (KRQEEEQAHATSLPPRASSPPQI). Residues 205–447 (QLSPEQLGMI…LLSEIWDVHE (243 aa)) are transactivation AF-2; required for ligand-dependent transactivation function; mediates interaction with CCAR2. In terms of domain architecture, NR LBD spans 209–447 (EQLGMIEKLV…LLSEIWDVHE (239 aa)).

The protein belongs to the nuclear hormone receptor family. NR1 subfamily. Heterodimer of NR1H3 and RXR (retinoic acid receptor). Interacts with CCAR2 (via N-terminus) in a ligand-independent manner. Interacts with SIRT1 and this interaction is inhibited by CCAR2. Interacts with GPS2. In terms of processing, ubiquitinated by UBR5, leading to its degradation: UBR5 specifically recognizes and binds ligand-bound NR1H3 when it is not associated with coactivators (NCOAs). In presence of NCOAs, the UBR5-degron is not accessible, preventing its ubiquitination and degradation. In terms of tissue distribution, visceral organs specific expression. Strong expression was found in liver, kidney and intestine followed by spleen and to a lesser extent the adrenals.

Its subcellular location is the nucleus. It localises to the cytoplasm. Nuclear receptor that exhibits a ligand-dependent transcriptional activation activity. Interaction with retinoic acid receptor (RXR) shifts RXR from its role as a silent DNA-binding partner to an active ligand-binding subunit in mediating retinoid responses through target genes defined by LXRES. LXRES are DR4-type response elements characterized by direct repeats of two similar hexanuclotide half-sites spaced by four nucleotides. Plays an important role in the regulation of cholesterol homeostasis, regulating cholesterol uptake through MYLIP-dependent ubiquitination of LDLR, VLDLR and LRP8. Interplays functionally with RORA for the regulation of genes involved in liver metabolism. Induces LPCAT3-dependent phospholipid remodeling in endoplasmic reticulum (ER) membranes of hepatocytes, driving SREBF1 processing and lipogenesis. Via LPCAT3, triggers the incorporation of arachidonate into phosphatidylcholines of ER membranes, increasing membrane dynamics and enabling triacylglycerols transfer to nascent very low-density lipoprotein (VLDL) particles. Via LPCAT3 also counteracts lipid-induced ER stress response and inflammation, likely by modulating SRC kinase membrane compartmentalization and limiting the synthesis of lipid inflammatory mediators. The protein is Oxysterols receptor LXR-alpha (NR1H3) of Homo sapiens (Human).